Reading from the N-terminus, the 181-residue chain is uncharacterized protein (181 aa).

Transmembrane regions (helical) follow at residues 3–23, 67–87, 92–112, and 159–179; these read LSQT…VLIL, ALLL…GLSV, VLGV…VLFI, and MFIL…LWII.

It belongs to the YggT family.

The protein localises to the cell membrane. This is an uncharacterized protein from Haemophilus influenzae (strain ATCC 51907 / DSM 11121 / KW20 / Rd).